The sequence spans 261 residues: Shikimate dehydrogenase (NADP(+)) (261 aa).

Residues 13–15 and Thr-60 each bind shikimate; that span reads SLS. The active-site Proton acceptor is the Lys-64. 2 residues coordinate shikimate: Asn-85 and Asp-100. Residues 121 to 125 and Ile-202 contribute to the NADP(+) site; that span reads GAGGA. Position 204 (Tyr-204) interacts with shikimate. Residue Gly-225 participates in NADP(+) binding.

Belongs to the shikimate dehydrogenase family. Homodimer.

It carries out the reaction shikimate + NADP(+) = 3-dehydroshikimate + NADPH + H(+). The protein operates within metabolic intermediate biosynthesis; chorismate biosynthesis; chorismate from D-erythrose 4-phosphate and phosphoenolpyruvate: step 4/7. In terms of biological role, involved in the biosynthesis of the chorismate, which leads to the biosynthesis of aromatic amino acids. Catalyzes the reversible NADPH linked reduction of 3-dehydroshikimate (DHSA) to yield shikimate (SA). The chain is Shikimate dehydrogenase (NADP(+)) from Exiguobacterium sibiricum (strain DSM 17290 / CCUG 55495 / CIP 109462 / JCM 13490 / 255-15).